A 221-amino-acid chain; its full sequence is MTQQFWGPCLFSLFMAVLAQETLDPQKSKVDCNKGVAGTVYEYGANTLDGGEYVQFQQYAGKHILFVNVASFCGLTATYPELNTLQEELRPFNVSVLGFPCNQFGKQEPGKNSEILLGLKYVRPGGGFVPNFQLFEKGDVNGDNEQKVFSFLKSSCPPTSELLGSPEHLFWDPMKVHDIRWNFEKFLVGPDGAPVMRWFHQTPVRVVQSDIMEYLNQTRTQ.

The N-terminal stretch at Met-1–Ala-19 is a signal peptide. Cys-73 is a catalytic residue.

It belongs to the glutathione peroxidase family. In terms of tissue distribution, expressed in the Bowman glands.

Its subcellular location is the secreted. It catalyses the reaction 2 glutathione + H2O2 = glutathione disulfide + 2 H2O. This is Glutathione peroxidase 6 (Gpx6) from Rattus norvegicus (Rat).